Reading from the N-terminus, the 272-residue chain is D-aminoacyl-tRNA deacylase (272 aa).

It belongs to the DtdA deacylase family. As to quaternary structure, monomer. Requires Zn(2+) as cofactor.

It carries out the reaction a D-aminoacyl-tRNA + H2O = a tRNA + a D-alpha-amino acid + H(+). It catalyses the reaction glycyl-tRNA(Ala) + H2O = tRNA(Ala) + glycine + H(+). In terms of biological role, D-aminoacyl-tRNA deacylase with broad substrate specificity. By recycling D-aminoacyl-tRNA to D-amino acids and free tRNA molecules, this enzyme counteracts the toxicity associated with the formation of D-aminoacyl-tRNA entities in vivo. The chain is D-aminoacyl-tRNA deacylase from Desulfurococcus amylolyticus (strain DSM 18924 / JCM 16383 / VKM B-2413 / 1221n) (Desulfurococcus kamchatkensis).